The following is a 356-amino-acid chain: MNEAETIRYHAAHNGRPAELDLLDQTKLPGTLTRLVCTTIDQTHDAIQRLVVRGAPAIGIAAAYGVTLTPVDAESNSSLPEAQARYRQTIDYLATSRPTAVNLFWALDRMRAIVDDFSGPVAELRERLVTEAIRIHDDDRQMCRSIGCHGATLLADCKSVMTHCNAGSLATSMWGTALAPMYHLHESGHSLEVFADETRPLLQGARLTAWELHQAGIPVTVCTDSMSGSLMRQGRVDAVIVGADRIAANGDVANKIGTYPLAVLAKYHNIPFYVAAPTNTFDSELESGDLIPIEQRSADEVSYPCGTDSPRQTPEGVAVVNPAFDVTPAELVTALITEKGVISEPDTAKVRAHLGL.

Substrate contacts are provided by residues 53–55 (RGA), Arg-97, and Gln-203. Asp-244 functions as the Proton donor in the catalytic mechanism. Position 254-255 (254-255 (NK)) interacts with substrate.

This sequence belongs to the eIF-2B alpha/beta/delta subunits family. MtnA subfamily.

It catalyses the reaction 5-(methylsulfanyl)-alpha-D-ribose 1-phosphate = 5-(methylsulfanyl)-D-ribulose 1-phosphate. Its pathway is amino-acid biosynthesis; L-methionine biosynthesis via salvage pathway; L-methionine from S-methyl-5-thio-alpha-D-ribose 1-phosphate: step 1/6. Functionally, catalyzes the interconversion of methylthioribose-1-phosphate (MTR-1-P) into methylthioribulose-1-phosphate (MTRu-1-P). The polypeptide is Methylthioribose-1-phosphate isomerase (Rhodopirellula baltica (strain DSM 10527 / NCIMB 13988 / SH1)).